A 129-amino-acid polypeptide reads, in one-letter code: Glycine cleavage system H protein (129 aa).

The Lipoyl-binding domain occupies 24–106; it reads TVVVGVTSYA…YGDGWLIKVR (83 aa). Position 65 is an N6-lipoyllysine (Lys65).

This sequence belongs to the GcvH family. The glycine cleavage system is composed of four proteins: P, T, L and H. The cofactor is (R)-lipoate.

Its function is as follows. The glycine cleavage system catalyzes the degradation of glycine. The H protein shuttles the methylamine group of glycine from the P protein to the T protein. The protein is Glycine cleavage system H protein of Gloeobacter violaceus (strain ATCC 29082 / PCC 7421).